A 215-amino-acid chain; its full sequence is Cytochrome c biogenesis ATP-binding export protein CcmA (215 aa).

One can recognise an ABC transporter domain in the interval 3-215 (LEAENLAGER…MAAFSVEDIA (213 aa)). 35–42 (GPNGSGKS) lines the ATP pocket.

This sequence belongs to the ABC transporter superfamily. CcmA exporter (TC 3.A.1.107) family. In terms of assembly, the complex is composed of two ATP-binding proteins (CcmA) and two transmembrane proteins (CcmB).

The protein resides in the cell inner membrane. The enzyme catalyses heme b(in) + ATP + H2O = heme b(out) + ADP + phosphate + H(+). Functionally, part of the ABC transporter complex CcmAB involved in the biogenesis of c-type cytochromes; once thought to export heme, this seems not to be the case, but its exact role is uncertain. Responsible for energy coupling to the transport system. The protein is Cytochrome c biogenesis ATP-binding export protein CcmA of Brucella abortus (strain 2308).